The sequence spans 79 residues: MKLSCLLLTLAIIFVLTIVHAPNVEAKALANPESDAIGFADAVGEADPNIKWSKYAKKVGKVIVKHGIPLAASIALSQG.

The first 21 residues, 1–21 (MKLSCLLLTLAIIFVLTIVHA), serve as a signal peptide directing secretion. Positions 22 to 48 (PNVEAKALANPESDAIGFADAVGEADP) are excised as a propeptide. Residue glutamine 78 is modified to Glutamine amide.

As to expression, expressed by the venom gland.

It is found in the secreted. In terms of biological role, may have antimicrobial properties, like most ant linear peptides. The chain is U-myrmeciitoxin(01)-Mg9a from Myrmecia gulosa (Red bulldog ant).